The following is an 82-amino-acid chain: MMNLSPPFKSPSGSSRAGRRNQLCCRRFRVPGKPLRNSTLKFFLLIRHTGCSRSRSFLEKAIVLSCPSAGLRSKGFSHEECR.

A disordered region spans residues 1 to 20; it reads MMNLSPPFKSPSGSSRAGRR.

This is an uncharacterized protein from Archaeoglobus fulgidus (strain ATCC 49558 / DSM 4304 / JCM 9628 / NBRC 100126 / VC-16).